The primary structure comprises 87 residues: uncharacterized protein (87 aa).

The first 25 residues, 1–25 (MKIRKILLSSALSFGMLISAVPALA), serve as a signal peptide directing secretion.

This is an uncharacterized protein from Bacillus subtilis (strain 168).